Reading from the N-terminus, the 360-residue chain is Magnesium-protoporphyrin IX monomethyl ester [oxidative] cyclase (360 aa).

It belongs to the AcsF family. Requires Fe cation as cofactor.

The enzyme catalyses Mg-protoporphyrin IX 13-monomethyl ester + 3 NADPH + 3 O2 + 2 H(+) = 3,8-divinyl protochlorophyllide a + 3 NADP(+) + 5 H2O. The protein operates within porphyrin-containing compound metabolism; chlorophyll biosynthesis (light-independent). Functionally, catalyzes the formation of the isocyclic ring in chlorophyll biosynthesis. Mediates the cyclase reaction, which results in the formation of divinylprotochlorophyllide (Pchlide) characteristic of all chlorophylls from magnesium-protoporphyrin IX 13-monomethyl ester (MgPMME). In Synechococcus sp. (strain WH7803), this protein is Magnesium-protoporphyrin IX monomethyl ester [oxidative] cyclase.